We begin with the raw amino-acid sequence, 229 residues long: 2-C-methyl-D-erythritol 4-phosphate cytidylyltransferase (229 aa).

The protein belongs to the IspD/TarI cytidylyltransferase family. IspD subfamily.

The catalysed reaction is 2-C-methyl-D-erythritol 4-phosphate + CTP + H(+) = 4-CDP-2-C-methyl-D-erythritol + diphosphate. The protein operates within isoprenoid biosynthesis; isopentenyl diphosphate biosynthesis via DXP pathway; isopentenyl diphosphate from 1-deoxy-D-xylulose 5-phosphate: step 2/6. Catalyzes the formation of 4-diphosphocytidyl-2-C-methyl-D-erythritol from CTP and 2-C-methyl-D-erythritol 4-phosphate (MEP). This Clostridium botulinum (strain Loch Maree / Type A3) protein is 2-C-methyl-D-erythritol 4-phosphate cytidylyltransferase.